The sequence spans 928 residues: TBC1 domain family member 2A (928 aa).

The residue at position 1 (methionine 1) is an N-acetylmethionine. Residues 1-19 (MEGAGENAPESSSSAPGSE) show a composition bias toward low complexity. Residues 1-39 (MEGAGENAPESSSSAPGSEESARDPQVPPPEEESGDCAR) are disordered. An interaction with CADH1 region spans residues 1–169 (MEGAGENAPE…AGNGPVLHLE (169 aa)). A PH domain is found at 45–142 (PKKLCGYLSK…WLQQLQMKRW (98 aa)). The disordered stretch occupies residues 225 to 275 (NKQAQGTGHEPPGEDSPQSGEPQREEQPLASDASTPGREPEDSPKPAPKPS). The tract at residues 295-433 (SEGITRNRTA…KVTQDFTHPP (139 aa)) is interaction with RAC1. A coiled-coil region spans residues 298-416 (ITRNRTAQEK…LMDKNHAKQQ (119 aa)). Residue serine 436 is modified to Phosphoserine. In terms of domain architecture, Rab-GAP TBC spans 625–817 (GVPREHRPRV…RVWDAFLYEG (193 aa)). A coiled-coil region spans residues 875-913 (MKQLRQLRMVHRERLEAELRELEQLKAEYLERRASRRRA). A phosphoserine mark is found at serine 915 and serine 920.

In terms of assembly, interacts with activated RAC1 and CDH1. As to expression, expressed in a broad range of tissues, especially in kidney, liver, lung and placenta. Also expressed in keratinocytes and epithelia-containing organs. Isoform 2 is differentially expressed in prostate normal and cancer cells (at protein level).

The protein resides in the cytoplasm. It localises to the cytoplasmic vesicle. It is found in the cell junction. In terms of biological role, acts as a GTPase-activating protein for RAB7A. Signal effector acting as a linker between RAC1 and RAB7A, leading to RAB7A inactivation and subsequent inhibition of cadherin degradation and reduced cell-cell adhesion. This chain is TBC1 domain family member 2A (TBC1D2), found in Homo sapiens (Human).